Here is a 301-residue protein sequence, read N- to C-terminus: MRIAILSRNENLYSTMRLKQAGEARGHEVDVIDTLHCYMDITSNNPKIRYKGEELPQYDAIIPRIGASVTFYGTAVVRQFEMMGTFVVNESVAISRSRDKLRSLQLLSRKGIGLPRTGFAHHPDNIQDVIRNVGGAPLVIKLLEGTQGIGVVLAETNKAAESVIEAFMGLKANIMVQEFIEEAKGADIRCFVVGNKVIAAMKRQAKEGEFRSNLHRGGSAQLVRLSKEERATAINAAKVMGLNLCGVDILQSKNGPVVMEVNSSPGLEGIEQATNKDVAGMIYEFIEKNAKPNSNRTKGRG.

Residues 104 to 287 (LQLLSRKGIG…VAGMIYEFIE (184 aa)) form the ATP-grasp domain. Residues lysine 141, 178 to 179 (EF), aspartate 187, and 211 to 213 (RSN) contribute to the ATP site. Positions 248, 260, and 262 each coordinate Mg(2+). Residues aspartate 248, glutamate 260, and asparagine 262 each coordinate Mn(2+).

It belongs to the RimK family. It depends on Mg(2+) as a cofactor. Requires Mn(2+) as cofactor.

The sequence is that of Probable alpha-L-glutamate ligase from Vibrio vulnificus (strain CMCP6).